A 179-amino-acid chain; its full sequence is Large ribosomal subunit protein uL5 (179 aa).

The protein belongs to the universal ribosomal protein uL5 family. Part of the 50S ribosomal subunit; part of the 5S rRNA/L5/L18/L25 subcomplex. Contacts the 5S rRNA and the P site tRNA. Forms a bridge to the 30S subunit in the 70S ribosome.

Its function is as follows. This is one of the proteins that bind and probably mediate the attachment of the 5S RNA into the large ribosomal subunit, where it forms part of the central protuberance. In the 70S ribosome it contacts protein S13 of the 30S subunit (bridge B1b), connecting the 2 subunits; this bridge is implicated in subunit movement. Contacts the P site tRNA; the 5S rRNA and some of its associated proteins might help stabilize positioning of ribosome-bound tRNAs. The polypeptide is Large ribosomal subunit protein uL5 (Bacillus cereus (strain 03BB102)).